Here is a 92-residue protein sequence, read N- to C-terminus: Large ribosomal subunit protein bL25 (92 aa).

The protein belongs to the bacterial ribosomal protein bL25 family. Part of the 50S ribosomal subunit; part of the 5S rRNA/L5/L18/L25 subcomplex. Contacts the 5S rRNA. Binds to the 5S rRNA independently of L5 and L18.

In terms of biological role, this is one of the proteins that binds to the 5S RNA in the ribosome where it forms part of the central protuberance. This Vibrio campbellii (strain ATCC BAA-1116) protein is Large ribosomal subunit protein bL25.